Consider the following 893-residue polypeptide: Protein bride of sevenless (893 aa).

The first 30 residues, methionine 1–histidine 30, serve as a signal peptide directing secretion. The Extracellular portion of the chain corresponds to valine 32–threonine 530. Disordered regions lie at residues threonine 36 to serine 66 and glycine 82 to threonine 102. The span at glutamine 50–serine 66 shows a compositional bias: polar residues. N-linked (GlcNAc...) asparagine glycans are attached at residues asparagine 183, asparagine 307, asparagine 328, asparagine 471, and asparagine 482. 8 helical membrane passes run glycine 531 to valine 551, proline 563 to phenylalanine 583, leucine 607 to leucine 627, alanine 630 to isoleucine 650, isoleucine 653 to methionine 673, tryptophan 692 to isoleucine 712, glycine 722 to leucine 742, and alanine 752 to proline 772. Topologically, residues arginine 773–phenylalanine 893 are cytoplasmic. Residues alanine 858–phenylalanine 893 form a disordered region.

Belongs to the G-protein coupled receptor 3 family.

It localises to the cell membrane. Its function is as follows. Acts as a ligand for sevenless tyrosine-kinase receptor during eye development. The protein is Protein bride of sevenless (boss) of Drosophila virilis (Fruit fly).